A 179-amino-acid chain; its full sequence is Adenylyl-sulfate kinase (179 aa).

13 to 20 (GLSGAGKS) lines the ATP pocket. Ser-87 acts as the Phosphoserine intermediate in catalysis.

This sequence belongs to the APS kinase family.

It carries out the reaction adenosine 5'-phosphosulfate + ATP = 3'-phosphoadenylyl sulfate + ADP + H(+). It functions in the pathway sulfur metabolism; hydrogen sulfide biosynthesis; sulfite from sulfate: step 2/3. In terms of biological role, catalyzes the synthesis of activated sulfate. The chain is Adenylyl-sulfate kinase from Paraburkholderia xenovorans (strain LB400).